We begin with the raw amino-acid sequence, 419 residues long: Peroxisomal membrane protein PMP47B (419 aa).

3 Solcar repeats span residues 6-120, 142-230, and 239-369; these read YDDL…TGKT, LSVW…LKSF, and VTPV…LLIL. Residues 12-32 form a helical membrane-spanning segment; the sequence is AFAGAGGGLLSMTLTYPLVTL. The segment covering 44–53 has biased composition (basic and acidic residues); that stretch reads KNEEEEKENS. Residues 44–69 form a disordered region; that stretch reads KNEEEEKENSNEDGSLSPKSSNTSNI. The span at 56–69 shows a compositional bias: polar residues; the sequence is DGSLSPKSSNTSNI. 3 helical membrane passes run 98 to 118, 204 to 224, and 245 to 265; these read SALFGIAVTNFVYYYFYELTG, FTGIVPALFLVLNPIIQYTIF, and LLLGAFGKLIATIITYPYITL. The disordered stretch occupies residues 274 to 305; that stretch reads MTENNEDSEKERTDSVQSLPEDGSDEDNSKEN. A run of 2 helical transmembrane segments spans residues 310-330 and 349-369; these read TINKIISKLPSPIVSMFIIGY and LLQSILNAAFLFYFKEELLIL.

The protein belongs to the mitochondrial carrier (TC 2.A.29) family.

The protein resides in the peroxisome membrane. Its function is as follows. May have transport activity. This chain is Peroxisomal membrane protein PMP47B (PMP47B), found in Candida boidinii (Yeast).